A 360-amino-acid polypeptide reads, in one-letter code: Histidinol-phosphate aminotransferase (360 aa).

Lysine 222 carries the post-translational modification N6-(pyridoxal phosphate)lysine.

The protein belongs to the class-II pyridoxal-phosphate-dependent aminotransferase family. Histidinol-phosphate aminotransferase subfamily. Homodimer. Requires pyridoxal 5'-phosphate as cofactor.

The enzyme catalyses L-histidinol phosphate + 2-oxoglutarate = 3-(imidazol-4-yl)-2-oxopropyl phosphate + L-glutamate. Its pathway is amino-acid biosynthesis; L-histidine biosynthesis; L-histidine from 5-phospho-alpha-D-ribose 1-diphosphate: step 7/9. This Listeria innocua serovar 6a (strain ATCC BAA-680 / CLIP 11262) protein is Histidinol-phosphate aminotransferase.